The following is a 700-amino-acid chain: Phenylalanine ammonia-lyase hkm12 (700 aa).

Catalysis depends on Tyr82, which acts as the Proton donor/acceptor. A cross-link (5-imidazolinone (Ala-Gly)) is located at residues 183–185 (ASG). Ser184 carries the 2,3-didehydroalanine (Ser) modification. (E)-cinnamate is bound by residues Asn242, Gln325, Arg331, Asn361, Lys432, Glu460, and Asn463.

Belongs to the PAL/histidase family. Post-translationally, contains an active site 4-methylidene-imidazol-5-one (MIO), which is formed autocatalytically by cyclization and dehydration of residues Ala-Ser-Gly.

It carries out the reaction L-phenylalanine = (E)-cinnamate + NH4(+). Its pathway is secondary metabolite biosynthesis. In terms of biological role, phenylalanine ammonia-lyase; part of the gene cluster that mediates the biosynthesis of hancockiamides, an unusual new family of N-cinnamoylated piperazines. The NRPS hkm10 and the NmrA-like reductase hkm9 are proposed to convert two molecules of L-Phe to the intermediary piperazine called xenocockiamide A. Xenocockiamide A is then converted to hancockiamide D via a series of hydroxylations and O-methylations. The tyrosinase hkm6 may catalyze an aromatic hydroxylation, then the 2-oxoglutarate-dependent Fe(II) dioxygenase hkm4 and the FAD-dependent phenol hydroxylase hkm7 may catalyze consecutive hydroxylations to install 2 more hydroxy groups, and the methyltransferase hkm8 probably catalyzes two methylations using 2 molecules of S-adenosyl-L-methionine (SAM). The NRPS hkm11 activates and transfers trans-cinnamate supplied by the PAL hkm12 to hancockiamide D and produces hancockiamide A. NRPS Hkm11 has the flexibility to tolerate the bulky hancockiamide G as a substrate and the absence of the acetyl-transferase hkm3 opens up the opportunity for hkm11 to introduce a second N-cinnamoyl moiety. The cytochrome P450 monooxygenase hkm5 catalyzes the methylenedioxy bridge formation, converting hancockiamide A into hancockiamide G. Hkm5 can also convert hancockiamide B into hancockiamide C, and hancockiamide D into hancockiamide H. The N-acetyltransferase hkm3 finally transfers an acetyl group to 1-N of piperazine, converting hancockiamide A into hancockiamide B and hancockiamide G into hancockiamide C. The polypeptide is Phenylalanine ammonia-lyase hkm12 (Aspergillus hancockii).